The sequence spans 175 residues: Gamma-crystallin B (175 aa).

2 consecutive Beta/gamma crystallin 'Greek key' domains span residues 2 to 40 (GKITFYEDRAFQGRSYECTTDCPNLQPYFSRCNSIRVES) and 41 to 83 (GCWM…HLIP). The connecting peptide stretch occupies residues 84 to 88 (PHSGT). 2 consecutive Beta/gamma crystallin 'Greek key' domains span residues 89–129 (YRMK…NVLE) and 130–172 (GSWI…RRVM).

This sequence belongs to the beta/gamma-crystallin family. Monomer.

Crystallins are the dominant structural components of the vertebrate eye lens. The polypeptide is Gamma-crystallin B (CRYGB) (Macaca mulatta (Rhesus macaque)).